A 456-amino-acid chain; its full sequence is Bifunctional protein GlmU (456 aa).

The pyrophosphorylase stretch occupies residues 1-229 (MTKKALSAVI…VMEVEGANNR (229 aa)). Residues 11–14 (LAAG), K25, Q76, 81–82 (GT), 103–105 (YGD), G140, E154, N169, and N227 contribute to the UDP-N-acetyl-alpha-D-glucosamine site. D105 is a binding site for Mg(2+). N227 lines the Mg(2+) pocket. The interval 230-250 (LQLAALERYLQNKQASKLLLE) is linker. Positions 251 to 456 (GVMIYDPARF…QGWQRPIKKK (206 aa)) are N-acetyltransferase. UDP-N-acetyl-alpha-D-glucosamine is bound by residues R333 and K351. H363 (proton acceptor) is an active-site residue. Positions 366 and 377 each coordinate UDP-N-acetyl-alpha-D-glucosamine. Acetyl-CoA-binding positions include A380, 386–387 (NY), S405, A423, and R440.

In the N-terminal section; belongs to the N-acetylglucosamine-1-phosphate uridyltransferase family. It in the C-terminal section; belongs to the transferase hexapeptide repeat family. Homotrimer. The cofactor is Mg(2+).

It is found in the cytoplasm. The catalysed reaction is alpha-D-glucosamine 1-phosphate + acetyl-CoA = N-acetyl-alpha-D-glucosamine 1-phosphate + CoA + H(+). It catalyses the reaction N-acetyl-alpha-D-glucosamine 1-phosphate + UTP + H(+) = UDP-N-acetyl-alpha-D-glucosamine + diphosphate. Its pathway is nucleotide-sugar biosynthesis; UDP-N-acetyl-alpha-D-glucosamine biosynthesis; N-acetyl-alpha-D-glucosamine 1-phosphate from alpha-D-glucosamine 6-phosphate (route II): step 2/2. It participates in nucleotide-sugar biosynthesis; UDP-N-acetyl-alpha-D-glucosamine biosynthesis; UDP-N-acetyl-alpha-D-glucosamine from N-acetyl-alpha-D-glucosamine 1-phosphate: step 1/1. It functions in the pathway bacterial outer membrane biogenesis; LPS lipid A biosynthesis. Functionally, catalyzes the last two sequential reactions in the de novo biosynthetic pathway for UDP-N-acetylglucosamine (UDP-GlcNAc). The C-terminal domain catalyzes the transfer of acetyl group from acetyl coenzyme A to glucosamine-1-phosphate (GlcN-1-P) to produce N-acetylglucosamine-1-phosphate (GlcNAc-1-P), which is converted into UDP-GlcNAc by the transfer of uridine 5-monophosphate (from uridine 5-triphosphate), a reaction catalyzed by the N-terminal domain. In Haemophilus influenzae (strain PittGG), this protein is Bifunctional protein GlmU.